Consider the following 251-residue polypeptide: RING-H2 finger protein ATL10 (251 aa).

The chain crosses the membrane as a helical span at residues 59–79; sequence MMLLSILICGIICCLGLHYII. The RING-type; atypical zinc finger occupies 135–177; the sequence is CVICLSDFVSGEQLRLLPKCNHGFHVRCIDKWLQQHLTCPKCR.

This sequence belongs to the RING-type zinc finger family. ATL subfamily.

The protein resides in the membrane. The enzyme catalyses S-ubiquitinyl-[E2 ubiquitin-conjugating enzyme]-L-cysteine + [acceptor protein]-L-lysine = [E2 ubiquitin-conjugating enzyme]-L-cysteine + N(6)-ubiquitinyl-[acceptor protein]-L-lysine.. The protein operates within protein modification; protein ubiquitination. This chain is RING-H2 finger protein ATL10 (ATL10), found in Arabidopsis thaliana (Mouse-ear cress).